We begin with the raw amino-acid sequence, 267 residues long: tRNA pseudouridine synthase A (267 aa).

Asp55 (nucleophile) is an active-site residue. Tyr109 is a binding site for substrate.

The protein belongs to the tRNA pseudouridine synthase TruA family.

It carries out the reaction uridine(38/39/40) in tRNA = pseudouridine(38/39/40) in tRNA. Functionally, formation of pseudouridine at positions 38, 39 and 40 in the anticodon stem and loop of transfer RNAs. The polypeptide is tRNA pseudouridine synthase A (Natronomonas pharaonis (strain ATCC 35678 / DSM 2160 / CIP 103997 / JCM 8858 / NBRC 14720 / NCIMB 2260 / Gabara) (Halobacterium pharaonis)).